A 342-amino-acid chain; its full sequence is Transmembrane protein 268 (342 aa).

The disordered stretch occupies residues 1 to 30; the sequence is MACEPQVDPGATGPLPPSSPGWSALPGGSP. Transmembrane regions (helical) follow at residues 105–125 and 132–152; these read AFAVVFYVVVWANIYSTSQMF and AGMLLVTLAAVSLTLTLVLVF.

In terms of assembly, interacts with ITGAM; this interaction inhibits ITGAM degradation via the endosome-lysosome pathway. Interacts with ITGB4; this interaction prevents ITGB4 degradation.

Its subcellular location is the cell membrane. Its function is as follows. Stabilizes cell surface expression of ITGAM and participates in the adhesion and migration of phagocytes during bacterial clearance. This Homo sapiens (Human) protein is Transmembrane protein 268.